The primary structure comprises 115 residues: Nitrogen regulatory protein P-II 1 (115 aa).

At Tyr54 the chain carries O-UMP-tyrosine.

Belongs to the P(II) protein family.

Its function is as follows. Could be involved in the regulation of nitrogen fixation. This is Nitrogen regulatory protein P-II 1 from Methanothermobacter thermautotrophicus (strain ATCC 29096 / DSM 1053 / JCM 10044 / NBRC 100330 / Delta H) (Methanobacterium thermoautotrophicum).